The chain runs to 158 residues: Ankyrin repeat domain-containing protein 37 (158 aa).

ANK repeat units follow at residues 1 to 25 (MLLLDCNPEVDSLKHLLETGASVNA), 30 to 59 (CEQSPVHLAAGGGLACFLLWQLQTGADLNQ), and 63 to 92 (FGEAPLHKAARVGSMECLSLLVASDAQIDL). A Nuclear localization signal motif is present at residues 129–149 (EQPNKDHCVQVLRLKRSFGSE).

Post-translationally, ubiquitinated by the CRL2(FEM1B) complex, leading to its degradation.

It localises to the nucleus. Its subcellular location is the cytoplasm. The sequence is that of Ankyrin repeat domain-containing protein 37 (ANKRD37) from Bos taurus (Bovine).